The chain runs to 257 residues: MSVAVRVIPCLDVDAGRVVKGVNFADLRDAGDPVELARRYDAEGADELTFLDVTASSGSRETTYDVVRRTAEQVFIPLTVGGGVRSVADVEKLLRAGADKVGVNTAAIARPELIGEIAHRFGAQVLVLSVDARRTLPGEPTTASGFEVTTHGGRRGTGLDAVEWAARAAELGAGEILLNSMDADGTKAGFDLEMLTEVRARVTVPLVASGGAGAVGHFPPAVAAGADAVLAASVFHFGQLTVGEVKDALRAAGSAVR.

Residues Asp-12 and Asp-131 contribute to the active site.

This sequence belongs to the HisA/HisF family. In terms of assembly, heterodimer of HisH and HisF.

Its subcellular location is the cytoplasm. It catalyses the reaction 5-[(5-phospho-1-deoxy-D-ribulos-1-ylimino)methylamino]-1-(5-phospho-beta-D-ribosyl)imidazole-4-carboxamide + L-glutamine = D-erythro-1-(imidazol-4-yl)glycerol 3-phosphate + 5-amino-1-(5-phospho-beta-D-ribosyl)imidazole-4-carboxamide + L-glutamate + H(+). The protein operates within amino-acid biosynthesis; L-histidine biosynthesis; L-histidine from 5-phospho-alpha-D-ribose 1-diphosphate: step 5/9. Functionally, IGPS catalyzes the conversion of PRFAR and glutamine to IGP, AICAR and glutamate. The HisF subunit catalyzes the cyclization activity that produces IGP and AICAR from PRFAR using the ammonia provided by the HisH subunit. The polypeptide is Imidazole glycerol phosphate synthase subunit HisF (Kineococcus radiotolerans (strain ATCC BAA-149 / DSM 14245 / SRS30216)).